We begin with the raw amino-acid sequence, 322 residues long: tRNA uridine(34) hydroxylase (322 aa).

Residues 125 to 219 (QDPNTIVIDA…YGKDPEVQGK (95 aa)) form the Rhodanese domain. Catalysis depends on C179, which acts as the Cysteine persulfide intermediate.

Belongs to the TrhO family.

It catalyses the reaction uridine(34) in tRNA + AH2 + O2 = 5-hydroxyuridine(34) in tRNA + A + H2O. In terms of biological role, catalyzes oxygen-dependent 5-hydroxyuridine (ho5U) modification at position 34 in tRNAs. The chain is tRNA uridine(34) hydroxylase from Bacillus subtilis (strain 168).